A 240-amino-acid chain; its full sequence is Putative exosome complex component RRP41 (240 aa).

This sequence belongs to the RNase PH family. Component of the RNA exosome complex.

The protein resides in the cytoplasm. Its subcellular location is the nucleus. It is found in the nucleolus. It localises to the nucleoplasm. In terms of biological role, non-catalytic component of the RNA exosome complex which has 3'-&gt;5' exoribonuclease activity and participates in a multitude of cellular RNA processing and degradation events. This is Putative exosome complex component RRP41 (exos-4.1) from Caenorhabditis elegans.